We begin with the raw amino-acid sequence, 325 residues long: Capsid protein (325 aa).

The tract at residues 30–89 (DLRTNPPPTEPPSRKSKLMSTSENKGKQPLHPPPTEGFPKPPPPPSSTPTTPTPPDQTKA) is disordered. Over residues 59–84 (LHPPPTEGFPKPPPPPSSTPTTPTPP) the composition is skewed to pro residues.

The protein belongs to the potexviruses coat protein family.

It is found in the virion. Its function is as follows. Required for genome encapsidation. Forms ribonucleoprotein complexes along with TGB1 helicase and viral RNA. The chain is Capsid protein from Citrus (ICRSV).